Reading from the N-terminus, the 657-residue chain is N-acetylgalactosaminyltransferase 7 (657 aa).

Topologically, residues 1–6 (MRLKIG) are cytoplasmic. Residues 7-29 (FILRSLLVVGSFLGLVVLWSSLS) form a helical; Signal-anchor for type II membrane protein membrane-spanning segment. The disordered stretch occupies residues 30–66 (SRPDDPSPLSRMREDRDVNNPLPNRGGNGLAPGDDRF). Over 30 to 657 (SRPDDPSPLS…KWEMNNIHSV (628 aa)) the chain is Lumenal. 5 disulfides stabilise this stretch: C197–C435, C426–C507, C545–C562, C585–C600, and C625–C640. The segment at 206–317 (LLTSSVVIVF…VNWYAPLVAP (112 aa)) is catalytic subdomain A. D247 and R277 together coordinate substrate. Mn(2+)-binding residues include D301 and H303. Residues 381-443 (PYRSPAMAGG…PCSRVGHIYR (63 aa)) form a catalytic subdomain B region. Substrate is bound at residue W412. H440 is a binding site for Mn(2+). Residue R443 coordinates substrate. Positions 532 to 652 (VEWGEIRGLE…GKMTQKWEMN (121 aa)) constitute a Ricin B-type lectin domain.

It belongs to the glycosyltransferase 2 family. GalNAc-T subfamily. It depends on Mn(2+) as a cofactor. In terms of tissue distribution, highly expressed in sublingual gland. Expressed at lower level in stomach, small intestiine and colon.

It is found in the golgi apparatus membrane. It carries out the reaction L-seryl-[protein] + UDP-N-acetyl-alpha-D-galactosamine = a 3-O-[N-acetyl-alpha-D-galactosaminyl]-L-seryl-[protein] + UDP + H(+). The enzyme catalyses L-threonyl-[protein] + UDP-N-acetyl-alpha-D-galactosamine = a 3-O-[N-acetyl-alpha-D-galactosaminyl]-L-threonyl-[protein] + UDP + H(+). It participates in protein modification; protein glycosylation. Glycopeptide transferase involved in O-linked oligosaccharide biosynthesis, which catalyzes the transfer of an N-acetyl-D-galactosamine residue to an already glycosylated peptide. In contrast to other proteins of the family, it does not act as a peptide transferase that transfers GalNAc onto serine or threonine residue on the protein receptor, but instead requires the prior addition of a GalNAc on a peptide before adding additional GalNAc moieties. Some peptide transferase activity is however not excluded, considering that its appropriate peptide substrate may remain unidentified. In Rattus norvegicus (Rat), this protein is N-acetylgalactosaminyltransferase 7 (Galnt7).